The following is a 297-amino-acid chain: Ribosomal RNA small subunit methyltransferase H (297 aa).

S-adenosyl-L-methionine is bound by residues 37–39 (GGH), Glu56, Phe87, Asp102, and His109.

It belongs to the methyltransferase superfamily. RsmH family.

The protein resides in the cytoplasm. The enzyme catalyses cytidine(1402) in 16S rRNA + S-adenosyl-L-methionine = N(4)-methylcytidine(1402) in 16S rRNA + S-adenosyl-L-homocysteine + H(+). Specifically methylates the N4 position of cytidine in position 1402 (C1402) of 16S rRNA. The protein is Ribosomal RNA small subunit methyltransferase H of Borrelia duttonii (strain Ly).